We begin with the raw amino-acid sequence, 467 residues long: Argininosuccinate lyase (467 aa).

The protein belongs to the lyase 1 family. Argininosuccinate lyase subfamily.

It is found in the cytoplasm. The catalysed reaction is 2-(N(omega)-L-arginino)succinate = fumarate + L-arginine. The protein operates within amino-acid biosynthesis; L-arginine biosynthesis; L-arginine from L-ornithine and carbamoyl phosphate: step 3/3. This Campylobacter curvus (strain 525.92) protein is Argininosuccinate lyase.